The sequence spans 162 residues: Novel acetylcholine receptor chaperone (162 aa).

Topologically, residues 1–5 (MASPR) are cytoplasmic. A helical membrane pass occupies residues 6–26 (TVTIVALSVTLGLFFVFMGTI). The Lumenal portion of the chain corresponds to 27–61 (KLTPRLSKDAYSEMKRAYKSYVKALPALKKIGISS). Residues 62–82 (VFLRKAIGSLELACGIVLTLV) form a helical membrane-spanning segment. Residues 83–88 (PGRPKD) are Cytoplasmic-facing. Residues 89–109 (VANFILLLLVLIVLFFHQLVG) form a helical membrane-spanning segment. The Lumenal portion of the chain corresponds to 110 to 114 (DPLKR). Residues 115 to 131 (YAHALVFGILLTCRLLV) traverse the membrane as a helical segment. Residues 132–162 (SRQPEEEFPEKKLSRGNNGAHSREPIKMKVS) are Cytoplasmic-facing. Residues 141 to 162 (EKKLSRGNNGAHSREPIKMKVS) form a disordered region. The span at 152-162 (HSREPIKMKVS) shows a compositional bias: basic and acidic residues.

Belongs to the DoxX family.

Its subcellular location is the peroxisome membrane. The protein resides in the cytoplasmic vesicle. The protein localises to the endoplasmic reticulum membrane. Functionally, molecular chaperone which mediates the proper assembly and functional expression of the nicotinic acetylcholine receptors (nAChRs) throughout the brain. Essential for the proper folding, assembly, function and surface trafficking of alpha-7 (CHRNA7), alpha-4-beta-2, alpha-3-beta-2 and alpha-3-beta-4 receptors. This chain is Novel acetylcholine receptor chaperone (tmem35a), found in Xenopus tropicalis (Western clawed frog).